The primary structure comprises 301 residues: Ribonuclease HIII (301 aa).

The RNase H type-2 domain maps to 90 to 301; sequence TPHIGIDESG…LDAILGKVGK (212 aa). Residues Asp-96, Glu-97, and Asp-198 each coordinate a divalent metal cation.

This sequence belongs to the RNase HII family. RnhC subfamily. Mn(2+) is required as a cofactor. Mg(2+) serves as cofactor.

The protein resides in the cytoplasm. The catalysed reaction is Endonucleolytic cleavage to 5'-phosphomonoester.. Endonuclease that specifically degrades the RNA of RNA-DNA hybrids. This chain is Ribonuclease HIII, found in Protochlamydia amoebophila (strain UWE25).